Consider the following 450-residue polypeptide: Divalent metal cation transporter MntH (450 aa).

The next 11 membrane-spanning stretches (helical) occupy residues Leu-34–Ile-54, Gly-59–Leu-81, Ile-108–Val-128, Ile-141–Met-161, Ala-170–Ser-190, Gly-212–Leu-232, Ile-263–Phe-283, Pro-305–Ala-325, Ser-361–Ile-381, Gln-383–Leu-403, and Val-422–Val-442.

Belongs to the NRAMP family.

It is found in the cell membrane. Functionally, h(+)-stimulated, divalent metal cation uptake system. This chain is Divalent metal cation transporter MntH, found in Staphylococcus aureus (strain MRSA252).